The primary structure comprises 496 residues: MNQYMLAIDQGTTSSRAILFNQKGEIVHMAQKEFTQYFPQPGWVEHNANEIWGSVLAVIASVLSEAQVKPEQVAGIGITNQRETTVVWEKDTGNPIYNAIVWQSRQTAGICDELKAKGYDPLFRKKTGLLIDAYFSGTKVKWILDHVDGARERAERGELLFGTIDTWLIWKLSGGRVHVTDYSNASRTLMFNIHTLEWDDELLDILGVPKAMLPEVRPSSEVYAKTAPYHFFGVEVPIAGAAGDQQAALFGQACFTEGMAKNTYGTGCFMLMNTGEKAVASKHGLLTTIAWGIDGKVEYALEGSIFVAGSAIQWLRDGLRMIKTAADSETYAEKVESTDGVYVVPAFIGLGTPYWDSEVRGAVFGLTRGTTKEHFIRATLESLAYQTKDVLAVMEADSGISLTTLRVDGGAVKNNFLMQFQSDLLAVPVERPVVNETTALGAAYLAGLAVGYWNSRDDIAAQWQLERRFEPKMDDDKRTMLYDGWKKAVRAAMAFK.

An ADP-binding site is contributed by threonine 12. Residues threonine 12, threonine 13, and serine 14 each contribute to the ATP site. A sn-glycerol 3-phosphate-binding site is contributed by threonine 12. Arginine 16 contacts ADP. Residues arginine 82, glutamate 83, and tyrosine 134 each contribute to the sn-glycerol 3-phosphate site. Arginine 82, glutamate 83, and tyrosine 134 together coordinate glycerol. Histidine 230 is modified (phosphohistidine; by HPr). Aspartate 244 serves as a coordination point for sn-glycerol 3-phosphate. Positions 244 and 245 each coordinate glycerol. Positions 266 and 309 each coordinate ADP. Residues threonine 266, glycine 309, glutamine 313, and glycine 410 each coordinate ATP. ADP contacts are provided by glycine 410 and asparagine 414.

Belongs to the FGGY kinase family. Post-translationally, the phosphoenolpyruvate-dependent sugar phosphotransferase system (PTS), including enzyme I, and histidine-containing protein (HPr) are required for the phosphorylation of, which leads to the activation of the enzyme.

The catalysed reaction is glycerol + ATP = sn-glycerol 3-phosphate + ADP + H(+). The protein operates within polyol metabolism; glycerol degradation via glycerol kinase pathway; sn-glycerol 3-phosphate from glycerol: step 1/1. Inhibited by fructose 1,6-bisphosphate and p-chloromercuribenzoate (PCMB). Functionally, key enzyme in the regulation of glycerol uptake and metabolism. Catalyzes the phosphorylation of glycerol to yield sn-glycerol 3-phosphate. This chain is Glycerol kinase, found in Thermus thermophilus.